The chain runs to 307 residues: uncharacterized protein (307 aa).

This is an uncharacterized protein from Saccharum officinarum (Sugarcane).